The sequence spans 84 residues: Small ribosomal subunit protein bS18A (84 aa).

It belongs to the bacterial ribosomal protein bS18 family. In terms of assembly, part of the 30S ribosomal subunit. Forms a tight heterodimer with protein bS6.

In terms of biological role, binds as a heterodimer with protein bS6 to the central domain of the 16S rRNA, where it helps stabilize the platform of the 30S subunit. In Mycolicibacterium paratuberculosis (strain ATCC BAA-968 / K-10) (Mycobacterium paratuberculosis), this protein is Small ribosomal subunit protein bS18A.